The primary structure comprises 506 residues: Probable E3 ubiquitin-protein ligase ARI14 (506 aa).

The tract at residues 79 to 308 (PDSSSEISLE…VDSGFCIKTE (230 aa)) is TRIAD supradomain. The RING-type 1 zinc finger occupies 83 to 140 (SEISLETDVYEFDGDNDLISMPFCSHKFDSKYWREYLEKNFYYVEKIQTTISCPDQDC). Cys106, His108, Cys135, Cys140, Cys180, Cys185, Cys207, Cys209, Cys214, Cys217, His222, Cys227, Cys258, Cys261, Cys277, Cys279, Cys284, Cys287, His294, and Cys304 together coordinate Zn(2+). An IBR-type zinc finger spans residues 158–227 (EMYERYIWRS…RLESHRPVSC (70 aa)). An RING-type 2; atypical zinc finger spans residues 258 to 287 (CPHCLCSLESDTKMPQFLTCVCRLRFCSRC). The RanBP2-type zinc finger occupies 462–492 (GTGPFWYCDRCTYANTWEDNECEMCYDDSAS).

This sequence belongs to the RBR family. Ariadne subfamily. It depends on Zn(2+) as a cofactor. Mostly expressed in closed flowers and, to a lower extent, in pollen.

It carries out the reaction [E2 ubiquitin-conjugating enzyme]-S-ubiquitinyl-L-cysteine + [acceptor protein]-L-lysine = [E2 ubiquitin-conjugating enzyme]-L-cysteine + [acceptor protein]-N(6)-ubiquitinyl-L-lysine.. Its pathway is protein modification; protein ubiquitination. Functionally, might act as an E3 ubiquitin-protein ligase, or as part of E3 complex, which accepts ubiquitin from specific E2 ubiquitin-conjugating enzymes and then transfers it to substrates. Negatively regulates male gametophyte formation and double fertilization. This Arabidopsis thaliana (Mouse-ear cress) protein is Probable E3 ubiquitin-protein ligase ARI14.